Consider the following 261-residue polypeptide: Imidazole glycerol phosphate synthase subunit HisF (261 aa).

Catalysis depends on residues aspartate 12 and aspartate 131.

Belongs to the HisA/HisF family. In terms of assembly, heterodimer of HisH and HisF.

It localises to the cytoplasm. It carries out the reaction 5-[(5-phospho-1-deoxy-D-ribulos-1-ylimino)methylamino]-1-(5-phospho-beta-D-ribosyl)imidazole-4-carboxamide + L-glutamine = D-erythro-1-(imidazol-4-yl)glycerol 3-phosphate + 5-amino-1-(5-phospho-beta-D-ribosyl)imidazole-4-carboxamide + L-glutamate + H(+). The protein operates within amino-acid biosynthesis; L-histidine biosynthesis; L-histidine from 5-phospho-alpha-D-ribose 1-diphosphate: step 5/9. Its function is as follows. IGPS catalyzes the conversion of PRFAR and glutamine to IGP, AICAR and glutamate. The HisF subunit catalyzes the cyclization activity that produces IGP and AICAR from PRFAR using the ammonia provided by the HisH subunit. The protein is Imidazole glycerol phosphate synthase subunit HisF of Brucella melitensis biotype 2 (strain ATCC 23457).